Reading from the N-terminus, the 486-residue chain is MATFKDACYYYKRINKLNHAVLKLGVNDTWRPSPPTKYKGWCLDCCQHTDLTYCRGCTMYHVCQWCSQYGRCFLDDEPHLLRMRTFKNEITKDDLKNLIDMYSTLFPMNQKIVCKFINNTKQHKCRNECMTQWYNHLLMPITLQSLSIELDGDVYYVFGYYDNMNSVNQTPFSFTNLIDMYDKLLLDDVNFVRMSFLPTSLQQEYAIRYFSKSRFISEQRKCVNDSHFSINVLENLHNPSFKVQITRNCSELLLGWNEACKLVKNVSAYFDMLKTSRIEFYSVSTRCRIFTQHKLKMASKLIKPNYITSNHRTSATEVHNCKWCSVNNSYTVWNDFRVKKIYDNIFSFLRALVKSNVNIGHRSSQEKIYEYVEDVLNVCDNEKWKTSIMKVFNCLEPVELDNVKYVLFNHEINWDVINVLVQSIGKVPQILTLKNVITIIQSIIYEWFDIRYMRNTPMVTFTIDKLRRLHTELKTAEYDSGISDVE.

Residues 1–81 (MATFKDACYY…CFLDDEPHLL (81 aa)) are RNA-binding. The zinc-binding domain stretch occupies residues 42–79 (CLDCCQHTDLTYCRGCTMYHVCQWCSQYGRCFLDDEPH). The segment at 82–176 (RMRTFKNEIT…VNQTPFSFTN (95 aa)) is important for cytoskeleton localization. The tract at residues 317 to 486 (EVHNCKWCSV…EYDSGISDVE (170 aa)) is interaction with host IRF3. Positions 479–483 (DSGIS) match the IKBKB-like degron (ILD) motif motif. Residues 480-483 (SGIS) carry the pLxIS motif motif.

It belongs to the rotavirus NSP1 family. Interacts (via C-terminus) with host IRF3; this interaction leads to IRF3 degradation. Interacts with host IRF7; this interaction leads to IRF7 degradation. Interacts with host CUL1 and CUL3. Interacts with host BTRC. Post-translationally, the C-terminal region is phosphorylated by host CKII/CSNK2A1. Phosphorylation of the DSGXS motif is essential for host NF-kappa-B inhibition.

It is found in the host cytoplasm. It localises to the host cytoskeleton. Its function is as follows. Plays a role in the inhibition of host innate immunity by inducing the degradation of key host factors required to activate interferon production such as IRF3, IRF5 or IRF7. Associates with components of cullin RING ligases (CRLs) including CUL1 or CUL3, which are essential multisubunit ubiquitination complexes, to modulate their activities. Recognizes the host NF-kappa-B regulator BTRC through the presence of a DSGXS motif in the C-terminal substrate recognition domain. The sequence is that of Non-structural protein 1 from Rotavirus A (strain RVA/Human/United States/Wa/1974/G1P1A[8]) (RV-A).